A 316-amino-acid polypeptide reads, in one-letter code: Epiphycan (316 aa).

The signal sequence occupies residues 1 to 23 (MKTFVNIFLGFFIFESVGAVPIT). Ser-98 is a glycosylation site (O-linked (Xyl...) (dermatan sulfate) serine). Positions 100-137 (VLVPQTQDGLPTCLLCTCLGTTVYCDDRELDAVPPLPK) constitute an LRRNT domain. Cys-112 and Cys-124 form a disulfide bridge. 6 LRR repeats span residues 138–159 (NTMY…DFAN), 162–183 (NLKR…AFRR), 186–207 (QLLE…PSTL), 232–252 (ELQH…PLPE), 253–274 (SLQA…TFCK), and 284–304 (ALED…PYAY). Cys-273 and Cys-306 are disulfide-bonded. A glycan (N-linked (GlcNAc...) asparagine) is linked at Asn-296.

The protein belongs to the small leucine-rich proteoglycan (SLRP) family. SLRP class III subfamily. In terms of processing, the O-linked glycosaminoglycan chain(s) are dermatan sulfate. In terms of tissue distribution, preferentially expressed in flattened chondrocytes of developing chick limb cartilage. Also found in the cartilage peripheral zone bordering with bone marrow cavity.

Its subcellular location is the secreted. It is found in the extracellular space. The protein localises to the extracellular matrix. May have a role in bone formation and also in establishing the ordered structure of cartilage through matrix organization. In Gallus gallus (Chicken), this protein is Epiphycan (EPYC).